The primary structure comprises 27 residues: Potassium channel toxin alpha-KTx 32.1 (27 aa).

Intrachain disulfides connect Cys-5/Cys-18 and Cys-12/Cys-25.

As to expression, expressed by the venom gland.

It localises to the secreted. Its function is as follows. Blocker of voltage-gated potassium channels. Inhibits voltage-gated potassium channels Kv1.2/KCNA2 (Kd=0.96 nM) and Kv1.3/KCNA3 (Kd=1.3 nM). Does not inhibit Kv1.1/KCNA1, Kv1.5/KCNA5, Kv11.1/KCNH2/ERG1, KCa1.1/KCNMA1, KCa3.1/KCNN4, NaV1.5/SCN5A, NaV1.4/SCN4A or HV1/HVCN1. Strongly inhibits the expression of the activation markers interleukin-2 receptor and CD40 ligand/CD40LG in anti-CD3-activated CD4(+) TEM lymphocytes. In Centruroides margaritatus (Central American bark Scorpion), this protein is Potassium channel toxin alpha-KTx 32.1.